The sequence spans 163 residues: MAFDYVRAAKYFVLWDFIKGFALGMKYFVAPKPTLNYPHEKGPLSPRFRGEHALRRYPSGEERCIACKLCEAICPAQAITIDAEPRDDGSRRTTRYDIDMTKCIYCGYCQEACPVDAIVEGPNFEYATETREELFYTKEKLLENGARWEAEIARNIEMDAPYR.

2 4Fe-4S ferredoxin-type domains span residues 55-84 and 94-123; these read RRYPSGEERCIACKLCEAICPAQAITIDAE and TRYDIDMTKCIYCGYCQEACPVDAIVEGPN. [4Fe-4S] cluster-binding residues include cysteine 64, cysteine 67, cysteine 70, cysteine 74, cysteine 103, cysteine 106, cysteine 109, and cysteine 113.

This sequence belongs to the complex I 23 kDa subunit family. In terms of assembly, NDH-1 is composed of 14 different subunits. Subunits NuoA, H, J, K, L, M, N constitute the membrane sector of the complex. Requires [4Fe-4S] cluster as cofactor.

It localises to the cell inner membrane. The enzyme catalyses a quinone + NADH + 5 H(+)(in) = a quinol + NAD(+) + 4 H(+)(out). Its function is as follows. NDH-1 shuttles electrons from NADH, via FMN and iron-sulfur (Fe-S) centers, to quinones in the respiratory chain. The immediate electron acceptor for the enzyme in this species is believed to be ubiquinone. Couples the redox reaction to proton translocation (for every two electrons transferred, four hydrogen ions are translocated across the cytoplasmic membrane), and thus conserves the redox energy in a proton gradient. The sequence is that of NADH-quinone oxidoreductase subunit I (nuoI) from Rhodobacter capsulatus (Rhodopseudomonas capsulata).